Reading from the N-terminus, the 280-residue chain is Putative high affinity immunoglobulin gamma Fc receptor IB (280 aa).

The N-terminal stretch at 1–15 (MWFLTTLLLWVPVDG) is a signal peptide. The Extracellular segment spans residues 16-198 (QVDTTKAVIT…LQLPTPVWFH (183 aa)). 2 Ig-like C2-type domains span residues 22–101 (AVIT…LEIH) and 95–184 (PIQL…ISQY). Cystine bridges form between C43-C85 and C124-C168. Residues N59, N152, and N163 are each glycosylated (N-linked (GlcNAc...) asparagine). Residues 199–219 (VLFYLAVGIMFLVNTVLWVTI) traverse the membrane as a helical segment. Topologically, residues 220–280 (RKELKRKKKW…VHRKEPQGAT (61 aa)) are cytoplasmic. Positions 258–280 (KCQEQKEEQLQEGVHRKEPQGAT) are disordered.

The protein belongs to the immunoglobulin superfamily. FCGR1 family.

The protein resides in the cell membrane. Functionally, may bind to the Fc region of immunoglobulins gamma with a low affinity compared to FCGR1A. May function in the humoral immune response. This chain is Putative high affinity immunoglobulin gamma Fc receptor IB, found in Homo sapiens (Human).